A 193-amino-acid chain; its full sequence is Cysteine and glycine-rich protein 2 (193 aa).

The region spanning 10–61 (CGACGRTVYHAEEVQCDGRSFHRCCFLCMVCRKNLDSTTVAIHDEEIYCKSC) is the LIM zinc-binding 1 domain. Positions 64–69 (KKYGPK) match the Nuclear localization signal motif. Residue K91 forms a Glycyl lysine isopeptide (Lys-Gly) (interchain with G-Cter in SUMO2) linkage. N6-acetyllysine is present on residues K112 and K131. The region spanning 119–170 (CSRCGDSVYAAEKIIGAGKPWHKNCFRCAKCGKSLESTTLTEKEGEIYCKGC) is the LIM zinc-binding 2 domain. N6-acetyllysine; alternate is present on K137. Position 137 is an N6-succinyllysine; alternate (K137). N6-acetyllysine is present on K161.

Interacts with KAT14. The LIM domain 1 is necessary and sufficient for this interaction. Interacts with GLRX3.

The protein resides in the nucleus. Its function is as follows. Drastically down-regulated in response to PDGF-BB or cell injury, that promote smooth muscle cell proliferation and dedifferentiation. Seems to play a role in the development of the embryonic vascular system. The chain is Cysteine and glycine-rich protein 2 (Csrp2) from Mus musculus (Mouse).